A 206-amino-acid chain; its full sequence is Sclerostin domain-containing protein 1 (206 aa).

Positions 1–22 (MLLSAIHFYGLLLACTFTRSYS) are cleaved as a signal peptide. Residues 40–68 (APASPSSNSTLNQARNGGRHYAGTGSDRN) are disordered. Positions 43 to 54 (SPSSNSTLNQAR) are enriched in polar residues. N-linked (GlcNAc...) asparagine glycosylation is present at N47. 4 cysteine pairs are disulfide-bonded: C75–C133, C89–C147, C100–C163, and C104–C165. The CTCK domain occupies 75–170 (CRELRSTKYI…TACKCKRYTR (96 aa)). N-linked (GlcNAc...) asparagine glycosylation is present at N173. The interval 176–206 (SHNFEGTSQAKPVQHHKERKRASKSSKHSTS) is disordered. Over residues 188-206 (VQHHKERKRASKSSKHSTS) the composition is skewed to basic residues.

It belongs to the sclerostin family. As to quaternary structure, interacts with LRP6.

The protein localises to the secreted. Functionally, can activate or inhibit Wnt signaling in a context-dependent manner. Activates the canonical Wnt pathway whereby acts through Disheveled proteins and beta-catenin. Antagonises Wnt signaling through the canonical pathways presumably by blocking accessibility of certain WNTs to their receptors. Induces posterior neural markers via components of the canonical Wnt pathway. In Gallus gallus (Chicken), this protein is Sclerostin domain-containing protein 1 (SOSTDC1).